We begin with the raw amino-acid sequence, 520 residues long: Ribonuclease Y (520 aa).

The chain crosses the membrane as a helical span at residues 3 to 23; that stretch reads IELAIIFIVLAAGAGFLIGNL. In terms of domain architecture, KH spans 210–273; it reads TVSVVALPSD…EVAKIALEKL (64 aa). An HD domain is found at 336-429; sequence VYQHSLEVAF…VQAADALSGA (94 aa).

It belongs to the RNase Y family.

It localises to the cell membrane. Endoribonuclease that initiates mRNA decay. The polypeptide is Ribonuclease Y (Geobacter sulfurreducens (strain ATCC 51573 / DSM 12127 / PCA)).